Consider the following 263-residue polypeptide: Probable septum site-determining protein MinC (263 aa).

The interval 107–159 is disordered; the sequence is LPPSGARERPLDIKDSAPRKPAEEPSPSAGEARPEPAKAEEKPAEPVSRPTKV. 2 stretches are compositionally biased toward basic and acidic residues: residues 112 to 129 and 138 to 150; these read ARER…KPAE and ARPE…EKPA.

The protein belongs to the MinC family. Interacts with MinD and FtsZ.

In terms of biological role, cell division inhibitor that blocks the formation of polar Z ring septums. Rapidly oscillates between the poles of the cell to destabilize FtsZ filaments that have formed before they mature into polar Z rings. Prevents FtsZ polymerization. In Pseudomonas aeruginosa (strain LESB58), this protein is Probable septum site-determining protein MinC.